The sequence spans 143 residues: Large ribosomal subunit protein uL16 (143 aa).

It belongs to the universal ribosomal protein uL16 family. In terms of assembly, part of the 50S ribosomal subunit.

Binds 23S rRNA and is also seen to make contacts with the A and possibly P site tRNAs. This is Large ribosomal subunit protein uL16 from Caulobacter vibrioides (strain ATCC 19089 / CIP 103742 / CB 15) (Caulobacter crescentus).